Reading from the N-terminus, the 81-residue chain is Large ribosomal subunit protein bL31B (81 aa).

This sequence belongs to the bacterial ribosomal protein bL31 family. Type B subfamily. In terms of assembly, part of the 50S ribosomal subunit.

The chain is Large ribosomal subunit protein bL31B from Borreliella burgdorferi (strain ZS7) (Borrelia burgdorferi).